A 467-amino-acid chain; its full sequence is MSPQTETKASVGFKAGVKDYKLTYYTPDYETKDTDILAAFRVTPQPGVPPEEAGAAVAAESSTGTWTTVWTDGLTSLDRYKGRCYHIETVIGEENQYIAYVAYPLDLFEEGSVTNMFTSIVGNVFGFKALRALRLEDLRIPTSYSKTFQGPPHGIQVERDKLNKYGRPLLGCTIKPKLGLSAKNYGRAVYECLRGGLDFTKDDENVNSQPFMRWRDRFLFCAEALYKAQAETGEIKGHYLNATAGTCEEMMKRAIFARELGVPIVMHDYLTGGFTANTSLAHYCRDNGLLLHIHRAMHAVIDRQKNHGMHFRVLAKALRMSGGDHIHGGTVVGKLEGEREMTLGFVDLLRDDFIEKDRSRGIFFTQDWVSMPGVIPVASGGIHVWHMPALTEIFGDDSVLQFGGGTLGHPWGNAPGAVANRVALEACVQARNEGRDLAREGNEIIREASKWSPELASACEVWKAIKF.

The propeptide occupies 1 to 2 (MS). An N-acetylproline modification is found at proline 3. Lysine 14 is modified (N6,N6,N6-trimethyllysine). Positions 123 and 173 each coordinate substrate. Lysine 175 serves as the catalytic Proton acceptor. Lysine 177 contacts substrate. Mg(2+)-binding residues include lysine 201, aspartate 203, and glutamate 204. Lysine 201 bears the N6-carboxylysine mark. Residue histidine 294 is the Proton acceptor of the active site. The substrate site is built by arginine 295, histidine 327, and serine 379.

The protein belongs to the RuBisCO large chain family. Type I subfamily. As to quaternary structure, heterohexadecamer of 8 large chains and 8 small chains; disulfide-linked. The disulfide link is formed within the large subunit homodimers. Mg(2+) serves as cofactor. Post-translationally, the disulfide bond which can form in the large chain dimeric partners within the hexadecamer appears to be associated with oxidative stress and protein turnover.

Its subcellular location is the plastid. The protein localises to the chloroplast. It carries out the reaction 2 (2R)-3-phosphoglycerate + 2 H(+) = D-ribulose 1,5-bisphosphate + CO2 + H2O. The enzyme catalyses D-ribulose 1,5-bisphosphate + O2 = 2-phosphoglycolate + (2R)-3-phosphoglycerate + 2 H(+). Functionally, ruBisCO catalyzes two reactions: the carboxylation of D-ribulose 1,5-bisphosphate, the primary event in carbon dioxide fixation, as well as the oxidative fragmentation of the pentose substrate in the photorespiration process. Both reactions occur simultaneously and in competition at the same active site. The polypeptide is Ribulose bisphosphate carboxylase large chain (Calamus usitatus (Palm tree)).